A 535-amino-acid chain; its full sequence is Peptide chain release factor 3 (535 aa).

A tr-type G domain is found at 8-278 (ARRRTFAIIS…VDQAPAPGPR (271 aa)). Residues 17-24 (SHPDAGKT), 85-89 (DTPGH), and 139-142 (NKLD) each bind GTP.

The protein belongs to the TRAFAC class translation factor GTPase superfamily. Classic translation factor GTPase family. PrfC subfamily.

The protein resides in the cytoplasm. In terms of biological role, increases the formation of ribosomal termination complexes and stimulates activities of RF-1 and RF-2. It binds guanine nucleotides and has strong preference for UGA stop codons. It may interact directly with the ribosome. The stimulation of RF-1 and RF-2 is significantly reduced by GTP and GDP, but not by GMP. The sequence is that of Peptide chain release factor 3 from Bordetella parapertussis (strain 12822 / ATCC BAA-587 / NCTC 13253).